The chain runs to 589 residues: Serine/threonine-protein phosphatase 2A 65 kDa regulatory subunit A alpha isoform (589 aa).

The residue at position 2 (Ala2) is an N-acetylalanine. HEAT repeat units follow at residues 8-46 (DSLY…GVER), 47-84 (TRSE…GGPE), 85-123 (YVHC…SPSD), 124-161 (LEAH…VSSA), 162-200 (VKAE…ELDN), 201-239 (VKSE…PQED), 240-278 (LEAL…GPEI), 279-321 (TKTD…RENV), 322-360 (IMSQ…GKDN), 361-399 (TIEH…GIRQ), 400-438 (LSQS…GVEF), 439-477 (FDEK…GKEW), 478-516 (AHAT…GQDI), 517-555 (TTKH…DNST), and 556-589 (LQSE…LSLA). A PP2A subunit B binding region spans residues 8 to 399 (DSLYPIAVLI…CVNEVIGIRQ (392 aa)). The interval 47 to 321 (TRSELLPFLT…NLSADCRENV (275 aa)) is polyoma small and medium T antigens Binding. An SV40 small T antigen binding region spans residues 85-239 (YVHCLLPPLE…NIAQLLPQED (155 aa)). At Lys280 the chain carries N6-acetyllysine. The PP2A subunit C binding stretch occupies residues 400–589 (LSQSLLPAIV…QEALTVLSLA (190 aa)).

This sequence belongs to the phosphatase 2A regulatory subunit A family. As to quaternary structure, PP2A consists of a common heterodimeric core enzyme, composed of PPP2CA a 36 kDa catalytic subunit (subunit C) and PPP2R1A a 65 kDa constant regulatory subunit (PR65 or subunit A), that associates with a variety of regulatory subunits. Proteins that associate with the core dimer include three families of regulatory subunits B (the R2/B/PR55/B55, R3/B''/PR72/PR130/PR59 and R5/B'/B56 families), the 48 kDa variable regulatory subunit, viral proteins, and cell signaling molecules. Found in a complex with at least ARL2, PPP2CB, PPP2R1A, PPP2R2A, PPP2R5E and TBCD. Interacts with the PP2A C catalytic subunit PPP2CA. Interacts with the PP2A B subunit PPP2R2A. Interacts with the PP2A B subunit PPP2R5D. Interacts with FOXO1; the interaction dephosphorylates FOXO1 on AKT-mediated phosphorylation sites. Interacts with IPO9. Interacts with TP53 and SGO1. Interacts with PLA2G16; this interaction might decrease PP2A activity. Interacts with CTTNBP2NL. Interacts with GNA12; the interaction promotes protein phosphatase 2A activation causing dephosphorylation of MAPT. Interacts with CIP2A; this interaction stabilizes CIP2A. Interacts with PABIR1/FAM122A. Interacts with ADCY8; antagonizes interaction between ADCY8 and calmodulin. Interacts with CRTC3 (when phosphorylated at 'Ser-391'). Interacts with SPRY2. Part of the core of STRIPAK complexes composed of PP2A catalytic and scaffolding subunits, the striatins (PP2A regulatory subunits), the striatin-associated proteins MOB4, STRIP1 and STRIP2, PDCD10 and members of the STE20 kinases, such as STK24 and STK26. Component of the Integrator-PP2A (INTAC) complex, composed of the Integrator core complex and protein phosphatase 2A subunits PPP2CA and PPP2R1A. (Microbial infection) Interacts with JC virus small t antigen; this interaction inhibits PPP2R1A activity.

Its subcellular location is the cytoplasm. The protein resides in the nucleus. It is found in the chromosome. The protein localises to the centromere. It localises to the lateral cell membrane. Its subcellular location is the cell projection. The protein resides in the dendrite. The PR65 subunit of protein phosphatase 2A serves as a scaffolding molecule to coordinate the assembly of the catalytic subunit and a variable regulatory B subunit. Upon interaction with GNA12 promotes dephosphorylation of microtubule associated protein TAU/MAPT. Required for proper chromosome segregation and for centromeric localization of SGO1 in mitosis. Together with RACK1 adapter, mediates dephosphorylation of AKT1 at 'Ser-473', preventing AKT1 activation and AKT-mTOR signaling pathway. Dephosphorylation of AKT1 is essential for regulatory T-cells (Treg) homeostasis and stability. Part of the striatin-interacting phosphatase and kinase (STRIPAK) complexes. STRIPAK complexes have critical roles in protein (de)phosphorylation and are regulators of multiple signaling pathways including Hippo, MAPK, nuclear receptor and cytoskeleton remodeling. Different types of STRIPAK complexes are involved in a variety of biological processes such as cell growth, differentiation, apoptosis, metabolism and immune regulation. Key mediator of a quality checkpoint during transcription elongation as part of the Integrator-PP2A (INTAC) complex. The INTAC complex drives premature transcription termination of transcripts that are unfavorably configured for transcriptional elongation: within the INTAC complex, acts as a scaffolding subunit for PPP2CA, which catalyzes dephosphorylation of the C-terminal domain (CTD) of Pol II subunit POLR2A/RPB1 and SUPT5H/SPT5, thereby preventing transcriptional elongation. Regulates the recruitment of the SKA complex to kinetochores. This chain is Serine/threonine-protein phosphatase 2A 65 kDa regulatory subunit A alpha isoform, found in Homo sapiens (Human).